The sequence spans 66 residues: Large ribosomal subunit protein bL35 (66 aa).

This sequence belongs to the bacterial ribosomal protein bL35 family.

The polypeptide is Large ribosomal subunit protein bL35 (Ruegeria sp. (strain TM1040) (Silicibacter sp.)).